The chain runs to 62 residues: Defensin BmKDfsin4 (62 aa).

The first 24 residues, 1-24 (MKTIVLLFVLALVFCTLEMGIVEA), serve as a signal peptide directing secretion. 3 disulfide bridges follow: cysteine 28–cysteine 49, cysteine 35–cysteine 57, and cysteine 39–cysteine 59.

This sequence belongs to the invertebrate defensin family. Type 2 subfamily.

Its subcellular location is the secreted. Its function is as follows. Dual-function peptide with antimicrobial and potassium channel-blocking activities. Shows inhibitory activity against Gram-positive bacteria such as S.aureus, B.subtilis, and M.luteus as well as methicillin-resistant S.aureus (MIC=0.1-20 uM). Does not act on bacteria by disrupting membranes. Also moderately inhibits Kv1.1/KCNA1 (25.2% inhibition at 1 uM), Kv1.2/KCNA2 (30.5% inhibition at 1 uM), and Kv1.3/KCNA3 potassium channels (IC(50)=510.2 nM, 61% inhibition at 1 uM). Inhibits potassium channels by interacting with the pore region. Does not show hemolytic activity. In vitro, dose-dependently decreases the production of Hepatitis B virus (HBV) DNA and HBV viral proteins in both culture medium and cell lysate. The chain is Defensin BmKDfsin4 from Olivierus martensii (Manchurian scorpion).